The sequence spans 783 residues: MSEMASMDPEGIDGVRMTWNVWPRTKVEASKCVIPVAACISPIRYHRDIPSVEYAPLRCRICTAALNPFARVDFLAKIWICPICFQRNHFPPHYHVMSETNVPCELYPQYTTVEYTLPNPSQPTGVGNFDQTGAVSGQPSPSVFVFVLDTCMIEEEFGYAKSALKQAIGLLPENALVGFVSFGTQAHVHELGFSDLTKVYVFRGDKEISKDQVLEQLGLGASGRRNPVGGFPMGRDNSANFGYSGVNRFLLPASDCEFTIDLLLEELQTDQWPVQAGRRQSRCTGVAISVATGLLGACFPGTGARIVALIGGPCSEGPGTIVSKDLSEPLRSHKDLDKDAAPFYKKAEKFYDALANQLVNQGHVLDLFASALDQVGVAEMKAAVERTGGLVVLSESFGHSVFKDSFKRVFEDGEESLGLCFNGTLEICCSKDIKIQGIIGPCASLQKKGPSVADTVIGEGNTTQWKMCGLDKRTCLTVFFDLSSSDQSSAPGGVNNQLYLQFMTSYQNSKGKTLQRVTTVTRQWVDTGLSTEELVQGFDQETAAVVVARLASLKMETEEGFDATRWLDRNLIRLCSKFGDYRKDDPASFTLNPNFSLFPQFTFNLRRSQFVQVFNNSPDETAYNRMLLNRENISNAAVMIQPSLTTYSFNSLPQPALLDVASIGADRILLLDSYISVVVFHGMTIAQWRNLGYQNQPEHQAFAQLLEAPQEDAQMIIRDRFPVPRLVVCDQHGSQARFLLAKLNPSATYNNASEMNAGSDIIFTDDVSLQVFFQHLQKLAVQS.

The Zn(2+) site is built by C59, C62, C81, and C84. Residues 59 to 84 (CRICTAALNPFARVDFLAKIWICPIC) are zinc finger-like.

The protein belongs to the SEC23/SEC24 family. SEC23 subfamily. In terms of assembly, component of the coat protein complex II (COPII), composed of at least five proteins: the Sec23/24 complex, the Sec13/31 complex and Sar1. Interacts with SEC24A.

Its subcellular location is the cytoplasmic vesicle. It localises to the COPII-coated vesicle membrane. The protein resides in the endoplasmic reticulum membrane. The protein localises to the membrane. Functionally, component of the coat protein complex II (COPII) which promotes the formation of transport vesicles from the endoplasmic reticulum (ER). The coat has two main functions, the physical deformation of the endoplasmic reticulum membrane into vesicles and the selection of cargo molecules. In Arabidopsis thaliana (Mouse-ear cress), this protein is Protein transport protein SEC23 B.